Reading from the N-terminus, the 70-residue chain is Small ribosomal subunit protein bS21 (70 aa).

The protein belongs to the bacterial ribosomal protein bS21 family.

The protein is Small ribosomal subunit protein bS21 of Paracidovorax citrulli (strain AAC00-1) (Acidovorax citrulli).